The chain runs to 824 residues: ABC transporter B family member 7 (824 aa).

Residues 41–101 form a disordered region; it reads RNSVKFNLDT…NKNNKNKINN (61 aa). The segment covering 63–101 has biased composition (low complexity); sequence NNNKNNNNNNNNNNNNNNNNNNNNNNNNNNKNNKNKINN. 6 helical membrane-spanning segments follow: residues 164 to 184, 252 to 272, 325 to 345, 347 to 367, 431 to 451, and 461 to 481; these read IWYFVFAFLALSITTLCQLAL, WIIIIVLVQTPFLFARYLLFT, LSTLVRCSLQLIGGLLILVFL, WKVTLLMISFLVILLISFLVF, AFWISFGSLLVMGTIIGIYGF, and ILLLQFILYSLMITASMNGLI. The ABC transmembrane type-1 domain occupies 167–489; sequence FVFAFLALSI…LIGSINEIQK (323 aa). Residues 521–767 form the ABC transporter domain; it reads ISFDNVYFNN…STSFYVTSVL (247 aa). ATP is bound at residue 570–576; that stretch reads GPSQSKE. Residues 772–813 form a disordered region; sequence NKYNNNNNNNNNNNNNNNNNNNNNNNNNNNNNNNNNNNNINN.

The protein belongs to the ABC transporter superfamily. ABCB family.

It localises to the membrane. In Dictyostelium discoideum (Social amoeba), this protein is ABC transporter B family member 7 (abcB7).